Here is a 371-residue protein sequence, read N- to C-terminus: Neuropeptide Y receptor type 6 (371 aa).

Topologically, residues 1–31 are extracellular; that stretch reads MEVSLNDPASNKTSAKSNSSAFFYFESCQSP. N-linked (GlcNAc...) asparagine glycans are attached at residues Asn-11 and Asn-18. A helical membrane pass occupies residues 32–52; sequence SLALLLLLIAYTVVLIMGICG. The Cytoplasmic portion of the chain corresponds to 53–72; that stretch reads NLSLITIIFKKQREAQNVTN. A helical membrane pass occupies residues 73-93; sequence ILIANLSLSDILVCVMCIPFT. The Extracellular portion of the chain corresponds to 94–111; it reads AIYTLMDRWIFGNTMCKL. A disulfide bond links Cys-109 and Cys-196. A helical membrane pass occupies residues 112-132; sequence TSYVQSVSISVSIFSLVLIAI. Residues 133 to 150 lie on the Cytoplasmic side of the membrane; sequence ERYQLIVNPRGWKPSASH. Residues 151–171 form a helical membrane-spanning segment; that stretch reads AYWGIMLIWLFSLLLSIPLLL. The Extracellular portion of the chain corresponds to 172–213; it reads SYHLTDEPFRNLSLPTDLYSHHVVCVEHWPSKTNQLLYSTSL. N-linked (GlcNAc...) asparagine glycosylation occurs at Asn-182. A helical transmembrane segment spans residues 214–234; the sequence is IMLQYFVPLGFMFICYLKIVI. At 235-263 the chain is on the cytoplasmic side; that stretch reads CLHKRNSKIDRRRENESRLTENKRINTML. A helical membrane pass occupies residues 264 to 284; that stretch reads ISIVVTFAACWLPLNTFNVIF. Over 285-297 the chain is Extracellular; that stretch reads DWYHEVLMSCHHD. A helical transmembrane segment spans residues 298 to 318; it reads LVFAICHLVAMVSTCINPLFY. The Cytoplasmic portion of the chain corresponds to 319-371; it reads GFLNRNFQKDLVVLIHHCLCFALRERYENIAISTLHTDESKGSLRVAHIPAGI. Residue Cys-336 is the site of S-palmitoyl cysteine attachment.

The protein belongs to the G-protein coupled receptor 1 family. As to expression, expressed in hippocampus, striatum, hypothalamus, cerebellum, small intestine, colon and adrenal gland.

The protein localises to the cell membrane. Receptor for neuropeptide Y and peptide YY. The activity of this receptor is mediated by G proteins that inhibit adenylate cyclase activity. This Oryctolagus cuniculus (Rabbit) protein is Neuropeptide Y receptor type 6 (NPY6R).